An 858-amino-acid polypeptide reads, in one-letter code: Leucine--tRNA ligase (858 aa).

The 'HIGH' region motif lies at 42–52 (PYPSGRLHMGH). The short motif at 618 to 622 (KMSKS) is the 'KMSKS' region element. Lys-621 serves as a coordination point for ATP.

Belongs to the class-I aminoacyl-tRNA synthetase family.

The protein localises to the cytoplasm. It catalyses the reaction tRNA(Leu) + L-leucine + ATP = L-leucyl-tRNA(Leu) + AMP + diphosphate. In Aeromonas salmonicida (strain A449), this protein is Leucine--tRNA ligase.